A 238-amino-acid chain; its full sequence is Ribosomal RNA small subunit methyltransferase G (238 aa).

S-adenosyl-L-methionine contacts are provided by residues G77, F82, A128–E129, and R147.

The protein belongs to the methyltransferase superfamily. RNA methyltransferase RsmG family.

It is found in the cytoplasm. Functionally, specifically methylates the N7 position of guanine in position 535 of 16S rRNA. This is Ribosomal RNA small subunit methyltransferase G from Exiguobacterium sibiricum (strain DSM 17290 / CCUG 55495 / CIP 109462 / JCM 13490 / 255-15).